The chain runs to 346 residues: N-acetyl-gamma-glutamyl-phosphate reductase (346 aa).

The active site involves cysteine 149.

Belongs to the NAGSA dehydrogenase family. Type 1 subfamily.

The protein localises to the cytoplasm. It carries out the reaction N-acetyl-L-glutamate 5-semialdehyde + phosphate + NADP(+) = N-acetyl-L-glutamyl 5-phosphate + NADPH + H(+). It functions in the pathway amino-acid biosynthesis; L-arginine biosynthesis; N(2)-acetyl-L-ornithine from L-glutamate: step 3/4. Catalyzes the NADPH-dependent reduction of N-acetyl-5-glutamyl phosphate to yield N-acetyl-L-glutamate 5-semialdehyde. The polypeptide is N-acetyl-gamma-glutamyl-phosphate reductase (Micrococcus luteus (strain ATCC 4698 / DSM 20030 / JCM 1464 / CCM 169 / CCUG 5858 / IAM 1056 / NBRC 3333 / NCIMB 9278 / NCTC 2665 / VKM Ac-2230) (Micrococcus lysodeikticus)).